Reading from the N-terminus, the 490-residue chain is Dual specificity protein kinase CLK3 (490 aa).

Tyrosine 7 bears the Phosphotyrosine mark. Residues serine 9, serine 49, serine 51, serine 67, serine 76, and serine 78 each carry the phosphoserine modification. Positions 22–138 (RRRSYSREHE…SKRSSRSVED (117 aa)) are disordered. 2 stretches are compositionally biased toward basic and acidic residues: residues 26-56 (YSRE…DRLP) and 63-76 (EHRD…EDRS). The span at 103–116 (TRKHAHHCHKRRTR) shows a compositional bias: basic residues. The segment covering 117 to 130 (SCSSASSRSQQSSK) has biased composition (low complexity). A Phosphoserine modification is found at serine 135. The Protein kinase domain maps to 156–472 (YEIVGNLGEG…LAEALLHPFF (317 aa)). ATP-binding positions include 162 to 170 (LGEGTFGKV) and lysine 186. Catalysis depends on aspartate 283, which acts as the Proton acceptor.

Belongs to the protein kinase superfamily. CMGC Ser/Thr protein kinase family. Lammer subfamily. In terms of processing, autophosphorylates on all three types of residues.

It localises to the nucleus. Its subcellular location is the cytoplasm. It is found in the cytoplasmic vesicle. The protein localises to the secretory vesicle. The protein resides in the acrosome. The enzyme catalyses L-seryl-[protein] + ATP = O-phospho-L-seryl-[protein] + ADP + H(+). It carries out the reaction L-threonyl-[protein] + ATP = O-phospho-L-threonyl-[protein] + ADP + H(+). The catalysed reaction is L-tyrosyl-[protein] + ATP = O-phospho-L-tyrosyl-[protein] + ADP + H(+). Its activity is regulated as follows. Leucettine L41 inhibits its kinase activity and affects the regulation of alternative splicing mediated by phosphorylation of SR proteins. Dual specificity kinase acting on both serine/threonine and tyrosine-containing substrates. Phosphorylates serine- and arginine-rich (SR) proteins of the spliceosomal complex. May be a constituent of a network of regulatory mechanisms that enable SR proteins to control RNA splicing and can cause redistribution of SR proteins from speckles to a diffuse nucleoplasmic distribution. Phosphorylates SRSF1 and SRSF3. Regulates the alternative splicing of tissue factor (F3) pre-mRNA in endothelial cells. The chain is Dual specificity protein kinase CLK3 (CLK3) from Bos taurus (Bovine).